A 266-amino-acid polypeptide reads, in one-letter code: Apolipoprotein A-I (266 aa).

The signal sequence occupies residues M1 to A18. A run of 2 repeats spans residues L67 to G88 and P89 to N110. The interval L67 to Q266 is 10 X approximate tandem repeats. M109 carries the post-translational modification Methionine sulfoxide. The 3; half-length repeat unit spans residues K111–Q121. 5 consecutive repeat copies span residues P122–A143, P144–S165, P166–A187, P188–G209, and A210–K231. A 9; half-length repeat occupies P232 to L242. Residues P243–Q266 form repeat 10.

This sequence belongs to the apolipoprotein A1/A4/E family. As to quaternary structure, homodimer. Interacts with APOA1BP and CLU. Component of a sperm activating protein complex (SPAP), consisting of APOA1, an immunoglobulin heavy chain, an immunoglobulin light chain and albumin. Interacts with NDRG1. Interacts with SCGB3A2. Interacts with NAXE and YJEFN3. Glycosylated. Post-translationally, palmitoylated. In terms of processing, phosphorylation sites are present in the extracellular medium.

The protein localises to the secreted. Its function is as follows. Participates in the reverse transport of cholesterol from tissues to the liver for excretion by promoting cholesterol efflux from tissues and by acting as a cofactor for the lecithin cholesterol acyltransferase (LCAT). As part of the SPAP complex, activates spermatozoa motility. The protein is Apolipoprotein A-I (APOA1) of Neomonachus schauinslandi (Hawaiian monk seal).